The following is a 486-amino-acid chain: Adenylate kinase 8 (486 aa).

2 adenylate kinase regions span residues 58–258 (PRII…NFIC) and 269–471 (PRIL…SRLV). ATP is bound at residue 67–72 (ASGKKT). Residues 87-112 (TFCDILKDDSDLTRAAQSYYDKKQNV) are NMP 1. Residues 139–142 (AIPK) and arginine 202 contribute to the AMP site. An LID 1 region spans residues 176–205 (GKRIDPVTGDVYHVTFMWPESEEVAQRLET). 278–283 (GAGRNL) contacts ATP. The interval 298–327 (CCGELLKAVSADESHMGELIKPYLESEQQV) is NMP 2. AMP-binding positions include 325–327 (QQV) and 354–357 (GFPR). The LID 2 stretch occupies residues 391–424 (LRAVDPVTGEWYHSVYKPPPGPEVQARLRFNPQH). Arginine 392 provides a ligand contact to ATP. Arginine 432 serves as a coordination point for AMP.

Belongs to the adenylate kinase family.

It localises to the cytoplasm. The protein localises to the cytosol. The enzyme catalyses AMP + ATP = 2 ADP. The catalysed reaction is a 2'-deoxyribonucleoside 5'-diphosphate + ATP = a 2'-deoxyribonucleoside 5'-triphosphate + ADP. It carries out the reaction a ribonucleoside 5'-diphosphate + ATP = a ribonucleoside 5'-triphosphate + ADP. Functionally, nucleoside monophosphate (NMP) kinase that catalyzes the reversible transfer of the terminal phosphate group between nucleoside triphosphates and monophosphates. Has highest activity toward AMP, and weaker activity toward dAMP, CMP and dCMP. Also displays broad nucleoside diphosphate kinase activity. This Danio rerio (Zebrafish) protein is Adenylate kinase 8 (ak8).